Consider the following 412-residue polypeptide: MNLKQELIERFTRYVKIDTQSNEDSHTVPTTPGQIEFGKLLVEELKEIGLTEVTMDDNGYVMATLPANTDKDVPVIGFLAHLDTATDFTGKNVKPQIHENFDGNAITLNEELNVVLTPEQFPELPSYKGHTIITTDGTTLLGADDKAGLTEIMVAMNYLIHNPQIKHGKIRVAFTPDEEIGRGPAHFDVEAFGASFAYTMDGGPLGGLEYESFNAAGAKLTFNGTNTHPGTAKNKMRNATKLAMEFNSYLPVEEAPEYTEGYEGFYHLLSLNGDVEQSKAYYIIRDFDRENFEARKHNVENIVKQMQEKYGRDAVVLEMNDQYYNMLEKIEPVREIVDIAYEAMKSLNIEPNIHPIRGGTDGSQLSYMGLPTPNIFTGGENYHGKFEYVSVDVMEKAVQVIIEIARRFEEQA.

A Zn(2+)-binding site is contributed by His-81. The active site involves Asp-83. Residue Asp-144 participates in Zn(2+) binding. Glu-178 functions as the Proton acceptor in the catalytic mechanism. Residues Glu-179, Asp-201, and His-383 each contribute to the Zn(2+) site.

The protein belongs to the peptidase M20B family. It depends on Zn(2+) as a cofactor.

The protein resides in the cytoplasm. The catalysed reaction is Release of the N-terminal residue from a tripeptide.. Cleaves the N-terminal amino acid of tripeptides. The chain is Peptidase T from Bacillus cereus (strain Q1).